The chain runs to 274 residues: 2,3,4,5-tetrahydropyridine-2,6-dicarboxylate N-succinyltransferase (274 aa).

Substrate-binding residues include R106 and D143.

The protein belongs to the transferase hexapeptide repeat family. In terms of assembly, homotrimer.

It localises to the cytoplasm. It carries out the reaction (S)-2,3,4,5-tetrahydrodipicolinate + succinyl-CoA + H2O = (S)-2-succinylamino-6-oxoheptanedioate + CoA. It participates in amino-acid biosynthesis; L-lysine biosynthesis via DAP pathway; LL-2,6-diaminopimelate from (S)-tetrahydrodipicolinate (succinylase route): step 1/3. This Rickettsia akari (strain Hartford) protein is 2,3,4,5-tetrahydropyridine-2,6-dicarboxylate N-succinyltransferase.